Consider the following 153-residue polypeptide: Superoxide dismutase [Cu-Zn] (153 aa).

Cu cation is bound by residues histidine 45, histidine 47, and histidine 62. An intrachain disulfide couples cysteine 56 to cysteine 145. The Zn(2+) site is built by histidine 62, histidine 70, histidine 79, and aspartate 82. Histidine 119 contributes to the Cu cation binding site.

The protein belongs to the Cu-Zn superoxide dismutase family. Homodimer. The cofactor is Cu cation. It depends on Zn(2+) as a cofactor.

It is found in the cytoplasm. It carries out the reaction 2 superoxide + 2 H(+) = H2O2 + O2. Its function is as follows. Destroys radicals which are normally produced within the cells and which are toxic to biological systems. In Drosophila virilis (Fruit fly), this protein is Superoxide dismutase [Cu-Zn].